The chain runs to 477 residues: UDP-N-acetylmuramate--L-alanine ligase (477 aa).

122–128 provides a ligand contact to ATP; it reads GTHGKTT.

This sequence belongs to the MurCDEF family.

Its subcellular location is the cytoplasm. The enzyme catalyses UDP-N-acetyl-alpha-D-muramate + L-alanine + ATP = UDP-N-acetyl-alpha-D-muramoyl-L-alanine + ADP + phosphate + H(+). The protein operates within cell wall biogenesis; peptidoglycan biosynthesis. Functionally, cell wall formation. The protein is UDP-N-acetylmuramate--L-alanine ligase of Xylella fastidiosa (strain 9a5c).